Reading from the N-terminus, the 237-residue chain is Large ribosomal subunit protein uL1 (237 aa).

It belongs to the universal ribosomal protein uL1 family. As to quaternary structure, part of the 50S ribosomal subunit.

Its function is as follows. Binds directly to 23S rRNA. The L1 stalk is quite mobile in the ribosome, and is involved in E site tRNA release. Functionally, protein L1 is also a translational repressor protein, it controls the translation of the L11 operon by binding to its mRNA. The chain is Large ribosomal subunit protein uL1 from Rickettsia typhi (strain ATCC VR-144 / Wilmington).